The sequence spans 625 residues: tRNA uridine 5-carboxymethylaminomethyl modification enzyme MnmG (625 aa).

FAD is bound at residue 11-16; that stretch reads GAGHAG. 271-285 contacts NAD(+); that stretch reads GPRYCPSIETKIVTF.

It belongs to the MnmG family. As to quaternary structure, homodimer. Heterotetramer of two MnmE and two MnmG subunits. The cofactor is FAD.

The protein resides in the cytoplasm. In terms of biological role, NAD-binding protein involved in the addition of a carboxymethylaminomethyl (cmnm) group at the wobble position (U34) of certain tRNAs, forming tRNA-cmnm(5)s(2)U34. The sequence is that of tRNA uridine 5-carboxymethylaminomethyl modification enzyme MnmG from Parabacteroides distasonis (strain ATCC 8503 / DSM 20701 / CIP 104284 / JCM 5825 / NCTC 11152).